A 237-amino-acid chain; its full sequence is Homeobox protein Nkx-3.1 (237 aa).

The span at 1–14 (MLRVAEPREPRVEA) shows a compositional bias: basic and acidic residues. 2 disordered regions span residues 1–96 (MLRV…EPES) and 108–130 (EHNPGDLASAPQVTKQPQKRSRA). Over residues 24 to 34 (PTQSKRLTSFL) the composition is skewed to polar residues. Basic and acidic residues-rich tracts occupy residues 38–47 (ILRDRAERHG) and 57–71 (PDPRRDSAPEPDKAG). Positions 125-184 (QKRSRAAFSHTQVIELERKFSHQKYLSAPERAHLAKNLKLTETQVKIWFQNRRYKTKRKQ) form a DNA-binding region, homeobox.

It belongs to the NK-3 homeobox family. As to quaternary structure, interacts with serum response factor (SRF). Interacts with SPDEF. Interacts with WDR77. Interacts with TOPORS which polyubiquitinates NKX3-1 and induces its proteasomal degradation. Interacts with FEM1B. Ubiquitinated by TOPORS; monoubiquitinated at several residues and also polyubiquitinated on single residues. As to expression, expressed mostly in the male urogenital tract, with highest expression in the epithelial cells lining the ducts of anterior, dorsolateral and ventral prostate and in the bulbourethral gland, and much lower in the seminal vesicle and the testis. Expression in the prostate increases during sexual maturation and is drastically reduced following castration. Expressed also in brain (hippocampus and external granular layer of the cerebral cortex), kidney (intralobular arteries), thymus and adrenal and salivary glands.

The protein resides in the nucleus. Its function is as follows. Transcription factor, which binds preferentially the consensus sequence 5'-TAAGT[AG]-3' and can behave as a transcriptional repressor. Plays an important role in normal prostate development, regulating proliferation of glandular epithelium and in the formation of ducts in prostate. Acts as a tumor suppressor controlling prostate carcinogenesis, as shown by the ability to suppress growth and tumorigenicity of prostate carcinoma cells. Plays a role in the formation of minor salivary glands (particularly palatine and lingual glands). This chain is Homeobox protein Nkx-3.1, found in Mus musculus (Mouse).